Consider the following 115-residue polypeptide: MSGEPAPVSVVPPPGEVEAGSGVHIVVEYCKPCGFEATYLELASAVKEEYPGIEIESRLGGTGAFEIEINGQLVFSKLENGGFPYEKDLMEAIRRASNGEPVEKITNSRPPCVIL.

At Ser-2 the chain carries N-acetylserine. Cysteines 30 and 33 form a disulfide. Cys-112 is lipidated: S-geranylgeranyl cysteine. A propeptide spans 113–115 (removed in mature form); sequence VIL.

Belongs to the SelWTH family. In terms of assembly, interacts with GPX1. In terms of processing, isoprenylation facilitates association with the plasma membrane and enhances the migratory phenotype of cells by inducing increased filopodia formation. Widely expressed with highest levels in kidney followed by brain and testis.

It localises to the cytoplasm. Its subcellular location is the cytosol. The protein localises to the cell membrane. Increases cell migration by inducing filopodia formation at the leading edge of migrating cells. Plays a role in regulation of apoptosis, possibly through control of CASP3. May be involved in a redox-related process. This is Migration and invasion enhancer 1 (Mien1) from Mus musculus (Mouse).